The primary structure comprises 758 residues: MINIEDISKSSNQSEEKQLKSTSSKPKYSFAAKSLFKGSNNITPYYLSTSNTFQCVASESIQTWLLSDDGHIFTSSGNFVLDVSSGGYFVELVQLNSNSKTQIWTIDTTNNKIQNQGNGKYLDIDNLNIYVAPLNGNATQQWTTFRRAPIPTGNWGYFQSKQLDSNNNYWGLSVLNNSTSYNTSVVMNKVQAKSIKRWSHFITFGGNLVLDIGPSINGSKTYYLNTNVYKANDLMQQWGINENNQIFNQYYPNLCIGFVGELGVDSTVNCVLAQPSSACDINFQWIANPTYSLNQIVSEVPEQFPAYTSGDLLASYQYLSDDATNGYTDDIRSLYTSINVSLENFYVNVTNATCPSSIHQLKIFQNQIKNELTYAINVRLVFDNYSGFYSKLFSQGSTNLTNLANLINVDMSSDQVVNGNYTDAITSVFYAIISEIPIGGSIIANIGESAEEFGELDAESNDSGPSTYQVTLSKLYDHLNENYENEMANAQRMKNTILQDWGMMSKTFTLCFLPTNNPSSLNMNGFDFQKISSIASLAYLTAMIQMLLPTNYQIYFTPAGYYAPVSSDDYSYTDSTGTYIMAEIDNCNSHPPKALTDKLWKNGVSKQEVFTSSYGWNLATSVTYYNMVGKYGGMFKLSFPTVKNITSVPMQFVMTNGSDRVGTFNVKTHFAGLASTYYNSGALGHHYYDIAVTDIDRNKVANFTVDNNLEALEGSYVSIKTNSLVVQPGYVVGNPTCNQGSFSQGFAASILIPIYKSN.

Residues 1–22 (MINIEDISKSSNQSEEKQLKST) form a disordered region. Ricin B-type lectin domains follow at residues 25–145 (KPKY…WTTF) and 156–288 (GYFQ…WIAN).

It belongs to the cup family.

The protein resides in the cytoplasm. It is found in the membrane. In terms of biological role, may play an important role in stabilizing and/or regulating the cell membrane during Ca(2+) stress or certain stages of development. In Dictyostelium discoideum (Social amoeba), this protein is Calcium up-regulated protein E (cupE).